A 447-amino-acid polypeptide reads, in one-letter code: N-succinylarginine dihydrolase (447 aa).

Residues 19 to 28, N110, and 137 to 138 each bind substrate; these read AGLSFGNEAS and HR. Residue E174 is part of the active site. A substrate-binding site is contributed by R212. H248 is a catalytic residue. Substrate-binding residues include D250 and N359. C365 acts as the Nucleophile in catalysis.

The protein belongs to the succinylarginine dihydrolase family. As to quaternary structure, homodimer.

It catalyses the reaction N(2)-succinyl-L-arginine + 2 H2O + 2 H(+) = N(2)-succinyl-L-ornithine + 2 NH4(+) + CO2. The protein operates within amino-acid degradation; L-arginine degradation via AST pathway; L-glutamate and succinate from L-arginine: step 2/5. Catalyzes the hydrolysis of N(2)-succinylarginine into N(2)-succinylornithine, ammonia and CO(2). This chain is N-succinylarginine dihydrolase, found in Escherichia coli (strain SE11).